A 46-amino-acid polypeptide reads, in one-letter code: Defensin-like protein 2 (46 aa).

Cystine bridges form between cysteine 3/cysteine 46, cysteine 13/cysteine 33, cysteine 19/cysteine 40, and cysteine 23/cysteine 42.

As to quaternary structure, monomer. In terms of tissue distribution, present in seeds, cotyledons and leaves. Not found in roots or stems.

Its function is as follows. Has antibacterial activity against the Gram-positive bacterium S.aureus and the Gram-negative bacteria E.coli and P.syringae. Does not have antibacterial activity against the phytopathogenic bacteria R.solanacearum, Rhataybacter sp and Erwinia sp. Does not inhibit trypsin, chymotrypsin or alpha-amylases. This chain is Defensin-like protein 2, found in Vigna unguiculata (Cowpea).